The following is a 944-amino-acid chain: MSMKFLTGLQDLLGLYETGTAASSPASPIPPTSPAMFAVPPQQQSHSAATSVRKKTCQDANSSGEDPNGRIRQCSHARTVSFPADMDLITGYHEAPSSLFHSYHDSQRVIDSSEILTAYREACQRRQCAPSAAVEKQIGYFHKSPDTRQELLSLKGERVSHAQMEALEEIFKRVQFNTIDFEYTFLDDDCAISLGEMIEFYDSCVRLNLSFNKQIDMRGWTTIFRSIRHAVSLQMLNLRYTNLNDRSIPALCKMARAQPSASLTCLHLENTQMSGKNLLVLICALKNNTGLRELYLGDNGLQPTDGSHIYQLITSNSSLQLLDLRNNSIGDSGVRHICDGLRHREAVEKSSLSAMVLWNNNVTGASMDSLAEALIENTKIETLNIGNNNLGVEGIARLKPALASNSHLHRLGLQNTGINCEGAIILAECIADNIALLRVDIRDNPIALAGLLALHSAMKMNTSITLLNIDASCVKLSSEKVREYQDEFERYFREIQTYCDRNKDDVLKRLTVTFDDEEGDSGVEKKDGNECEGEDNKDRQDTPAETENGVSSNESKLENEEVGVSKPESNNNEKSPLMASSSTSKLSRKERHQRFVRSSSLTCTETVHDIHDRLREMSGSTHSLDAAIAAAASNSTMQNLLTVSYGSNPGPLDSSSNSESMKTIKKSFTVTAASSSSLPLAEWGSLPALPQASPSSTPVVRKLRRFSVSPSSSVFDVATTSSAASSTASSPIPENSIALPVRPSTLAIGIPIIGSVPAGPSSAPLILVEDHKDGPITSNQISDTERRISEEIERQKKDEQEIEKSCRSVIRDLLNYVEYEEKSQVERKASLLLRNTFSRPNPEELLRNLRLSEATGSTTPRTPLTPSRYVQVFNINSFLKLYFIKACILRVLEIAEELEGESDEQICQSVIRCLVRDVLQAEKNELRSTLDRRRRHNSVRNSPV.

The disordered stretch occupies residues 42-71; it reads QQQSHSAATSVRKKTCQDANSSGEDPNGRI. LRR repeat units follow at residues 203–224, 232–255, 262–282, 290–311, and 318–338; these read SCVRLNLSFNKQIDMRGWTTIF, SLQMLNLRYTNLNDRSIPALCKMA, SLTCLHLENTQMSGKNLLVLI, GLRELYLGDNGLQPTDGSHIYQ, and SLQLLDLRNNSIGDSGVRHIC. Residues 517-598 form a disordered region; it reads EEGDSGVEKK…KERHQRFVRS (82 aa). Positions 522–542 are enriched in basic and acidic residues; the sequence is GVEKKDGNECEGEDNKDRQDT. Composition is skewed to polar residues over residues 543-554 and 567-585; these read PAETENGVSSNE and PESNNNEKSPLMASSSTSK. The segment covering 586 to 595 has biased composition (basic residues); that stretch reads LSRKERHQRF.

It belongs to the PPP1R37 family.

The chain is Protein phosphatase 1 regulatory subunit 37 homolog from Caenorhabditis elegans.